Reading from the N-terminus, the 1356-residue chain is RHO1 GDP-GTP exchange protein 2 (1356 aa).

Ser-2 carries the N-acetylserine modification. Disordered stretches follow at residues 74–94 and 109–175; these read RRSGVEAAIDDSDIPNNEMKG and EVPD…PRNE. At Ser-76 the chain carries Phosphoserine. 2 stretches are compositionally biased toward polar residues: residues 109-125 and 147-157; these read EVPDTQSLSSADNTPVS and HIYSTSNSASR. Ser-193 carries the post-translational modification Phosphoserine. Disordered regions lie at residues 202–291, 303–362, 383–409, 531–571, and 626–645; these read LKKQ…RSMS, SFQS…SSSN, SVSGTSLSSPRRSSMTPLSASRPVMSA, GNHS…SQQK, and NISMALDDDDEEKPSWTSSV. A compositionally biased stretch (polar residues) spans 204 to 221; that stretch reads KQSSFSTGSASTTPTQAR. The residue at position 223 (Ser-223) is a Phosphoserine. A compositionally biased stretch (basic and acidic residues) spans 235–244; the sequence is SSKDLHEQHQ. Over residues 250–265 the composition is skewed to low complexity; that stretch reads QHNNINNHNNNNTNNN. Residues 271-281 are compositionally biased toward polar residues; that stretch reads VGSSNSNYPQH. The span at 282–291 shows a compositional bias: low complexity; it reads SHSISSRSMS. The span at 303–325 shows a compositional bias: polar residues; it reads SFQSKTSNSRKATQKYDITSNPF. Over residues 329–338 the composition is skewed to basic residues; the sequence is HHHHHHHHSS. 2 stretches are compositionally biased toward low complexity: residues 339-362 and 383-401; these read NSHSSLNNVHGSGNSSSVMGSSSN and SVSGTSLSSPRRSSMTPLS. 2 positions are modified to phosphoserine: Ser-566 and Ser-628. The DH domain maps to 659–846; that stretch reads KRQEAIYEVY…RDFMKRIDQA (188 aa). A CNH domain is found at 1034–1336; it reads TNKINSVTSC…RLLQTSTQEI (303 aa).

Its function is as follows. Stimulates the exchange of RHO1 GDP-bound form into GTP-bound form. The sequence is that of RHO1 GDP-GTP exchange protein 2 (ROM2) from Saccharomyces cerevisiae (strain ATCC 204508 / S288c) (Baker's yeast).